A 214-amino-acid polypeptide reads, in one-letter code: ATP synthase subunit a (214 aa).

The next 6 membrane-spanning stretches (helical) occupy residues 9–29 (LDGM…VFMI), 64–84 (IMMV…TYGI), 88–108 (LWVN…SGYI), 121–141 (SGAP…SIMI), 150–170 (LVAN…VLSS), and 182–202 (LIMV…AYIF).

The protein belongs to the ATPase A chain family. As to quaternary structure, F-type ATPases have 2 components, CF(1) - the catalytic core - and CF(0) - the membrane proton channel. CF(1) has five subunits: alpha(3), beta(3), gamma(1), delta(1), epsilon(1). CF(0) has three main subunits: a, b and c.

Its subcellular location is the mitochondrion inner membrane. In terms of biological role, mitochondrial membrane ATP synthase (F(1)F(0) ATP synthase or Complex V) produces ATP from ADP in the presence of a proton gradient across the membrane which is generated by electron transport complexes of the respiratory chain. F-type ATPases consist of two structural domains, F(1) - containing the extramembraneous catalytic core and F(0) - containing the membrane proton channel, linked together by a central stalk and a peripheral stalk. During catalysis, ATP synthesis in the catalytic domain of F(1) is coupled via a rotary mechanism of the central stalk subunits to proton translocation. Key component of the proton channel; it may play a direct role in the translocation of protons across the membrane. This Albinaria caerulea (Land snail) protein is ATP synthase subunit a (ATP6).